A 334-amino-acid chain; its full sequence is Heat-inducible transcription repressor HrcA (334 aa).

The protein belongs to the HrcA family.

Functionally, negative regulator of class I heat shock genes (grpE-dnaK-dnaJ and groELS operons). Prevents heat-shock induction of these operons. The chain is Heat-inducible transcription repressor HrcA from Acidovorax sp. (strain JS42).